The chain runs to 88 residues: uncharacterized protein (88 aa).

The first 24 residues, 1-24 (MLPRSCKDFYETLRTAVLCGQACA), serve as a signal peptide directing secretion.

It to Rhizobium NGR234A y4oL.

This is an uncharacterized protein from Sinorhizobium fredii (strain NBRC 101917 / NGR234).